A 474-amino-acid chain; its full sequence is Semenogelin-2 (474 aa).

The first 23 residues, 1-23 (MKSIILFVLSLLLILEKQAAVMG), serve as a signal peptide directing secretion. 5 disordered regions span residues 24 to 62 (QKGG…SKGS), 132 to 158 (GGQA…LSSQ), 173 to 194 (KEQA…QSSY), 226 to 247 (VREE…DRLQ), and 272 to 474 (NLNQ…SSTE). Polar residues-rich tracts occupy residues 31–40 (QLPSGSSQFP), 137–158 (RGTQ…LSSQ), and 174–194 (EQAS…QSSY). Residues 292–310 (RTEERQLNHGEKSVQKDVS) are compositionally biased toward basic and acidic residues. The span at 325-334 (KSQNQVTIHS) shows a compositional bias: polar residues. Residues 335 to 346 (QDQEHGHKENKM) are compositionally biased toward basic and acidic residues. Over residues 372–397 (GSISIQTEEQIHGKSQNQVRIPSQAQ) the composition is skewed to polar residues. Basic and acidic residues predominate over residues 399-426 (YGHKENKISYRSSSTEERRLNSGEKDVQ). Polar residues predominate over residues 445 to 455 (KSQNQVTIPSQ). Over residues 456-465 (DQEHGHKENK) the composition is skewed to basic and acidic residues.

It belongs to the semenogelin family. In terms of assembly, interacts with SERPINA5.

The protein resides in the secreted. Functionally, participates in the formation of a gel matrix (sperm coagulum) entrapping the accessory gland secretions and ejaculated spermatozoa. In Gorilla gorilla gorilla (Western lowland gorilla), this protein is Semenogelin-2 (SEMG2).